The chain runs to 233 residues: DNA repair protein RecO (233 aa).

This sequence belongs to the RecO family.

In terms of biological role, involved in DNA repair and RecF pathway recombination. The sequence is that of DNA repair protein RecO from Pseudomonas aeruginosa (strain UCBPP-PA14).